Consider the following 498-residue polypeptide: Polyphosphate:AMP phosphotransferase (498 aa).

PPK2 regions lie at residues 11-234 (IDDD…MQAA) and 269-491 (LSKE…LEKA).

The protein belongs to the polyphosphate kinase 2 (PPK2) family. Class II subfamily.

It carries out the reaction [phosphate](n) + ADP = [phosphate](n+1) + AMP. Its function is as follows. Uses inorganic polyphosphate (polyP) as a donor to convert AMP to ADP. Can also convert GMP to GDP, with lower efficiency. This chain is Polyphosphate:AMP phosphotransferase, found in Pseudomonas syringae pv. tomato (strain ATCC BAA-871 / DC3000).